A 146-amino-acid chain; its full sequence is Large ribosomal subunit protein uL15 (146 aa).

Residues 1 to 54 (MKLHELQPAAGSRKAPKRVGRGTGSGLGRNAGKGEKGQNARSGGGVRPGFEGGQ) form a disordered region. 2 stretches are compositionally biased toward gly residues: residues 21–31 (RGTGSGLGRNA) and 42–52 (SGGGVRPGFEG).

This sequence belongs to the universal ribosomal protein uL15 family. In terms of assembly, part of the 50S ribosomal subunit.

In terms of biological role, binds to the 23S rRNA. This chain is Large ribosomal subunit protein uL15, found in Clostridium botulinum (strain Eklund 17B / Type B).